The sequence spans 243 residues: Ubiquinone/menaquinone biosynthesis C-methyltransferase UbiE (243 aa).

Residues threonine 69, aspartate 90, and 116-117 each bind S-adenosyl-L-methionine; that span reads DA.

Belongs to the class I-like SAM-binding methyltransferase superfamily. MenG/UbiE family.

The catalysed reaction is a 2-demethylmenaquinol + S-adenosyl-L-methionine = a menaquinol + S-adenosyl-L-homocysteine + H(+). It catalyses the reaction a 2-methoxy-6-(all-trans-polyprenyl)benzene-1,4-diol + S-adenosyl-L-methionine = a 5-methoxy-2-methyl-3-(all-trans-polyprenyl)benzene-1,4-diol + S-adenosyl-L-homocysteine + H(+). It functions in the pathway quinol/quinone metabolism; menaquinone biosynthesis; menaquinol from 1,4-dihydroxy-2-naphthoate: step 2/2. Its pathway is cofactor biosynthesis; ubiquinone biosynthesis. Its function is as follows. Methyltransferase required for the conversion of demethylmenaquinol (DMKH2) to menaquinol (MKH2) and the conversion of 2-polyprenyl-6-methoxy-1,4-benzoquinol (DDMQH2) to 2-polyprenyl-3-methyl-6-methoxy-1,4-benzoquinol (DMQH2). The polypeptide is Ubiquinone/menaquinone biosynthesis C-methyltransferase UbiE (Paraburkholderia phytofirmans (strain DSM 17436 / LMG 22146 / PsJN) (Burkholderia phytofirmans)).